The sequence spans 1083 residues: LIM and calponin homology domains-containing protein 1 (1083 aa).

3 disordered regions span residues M1–T22, S185–D248, and R291–F311. The 118-residue stretch at D21 to N138 folds into the Calponin-homology (CH) domain. A compositionally biased stretch (basic and acidic residues) spans R229–D248. Residues L356–R424 adopt a coiled-coil conformation. Residues P462–L474 show a composition bias toward low complexity. Disordered stretches follow at residues P462 to P512, Q625 to V661, K698 to S725, and S759 to E779. 2 stretches are compositionally biased toward polar residues: residues R478–P512 and S640–A657. Basic and acidic residues predominate over residues E716 to S725. Residues Q784–T835 adopt a coiled-coil conformation. Residues K987–S1006 form a disordered region. A compositionally biased stretch (polar residues) spans L991–S1006. One can recognise an LIM zinc-binding domain in the interval K1011–A1077.

It belongs to the LIMCH1 family.

The protein localises to the cytoplasm. It localises to the cytoskeleton. The protein resides in the stress fiber. Actin stress fibers-associated protein that activates non-muscle myosin IIa. Through the activation of non-muscle myosin IIa, positively regulates actin stress fibers assembly and stabilizes focal adhesions. It therefore negatively regulates cell spreading and cell migration. This chain is LIM and calponin homology domains-containing protein 1 (limch1), found in Xenopus laevis (African clawed frog).